A 134-amino-acid polypeptide reads, in one-letter code: Mite allergen Blo t 5 (134 aa).

A signal peptide spans 1–17 (MKFAIVLIACFAASVLA). The stretch at 18–113 (QEHKPKKDDF…RFNYEEAQTL (96 aa)) forms a coiled coil.

Belongs to the mite group 5 allergen family. As to quaternary structure, may exist as homodimer and homotrimer. In terms of tissue distribution, midgut and hindgut contents as well as fecal pellets (at protein level).

The sequence is that of Mite allergen Blo t 5 (BLOT5) from Blomia tropicalis (Mite).